The sequence spans 297 residues: Small ribosomal subunit biogenesis GTPase RsgA (297 aa).

Residues 65–223 (RNELVRPPVA…VADTPGFSAI (159 aa)) form the CP-type G domain. GTP is bound by residues 114–117 (TKVD) and 166–174 (GQSGAGKST). Zn(2+) is bound by residues Cys-247, Cys-252, His-254, and Cys-260.

The protein belongs to the TRAFAC class YlqF/YawG GTPase family. RsgA subfamily. As to quaternary structure, monomer. Associates with 30S ribosomal subunit, binds 16S rRNA. Zn(2+) serves as cofactor.

It is found in the cytoplasm. One of several proteins that assist in the late maturation steps of the functional core of the 30S ribosomal subunit. Helps release RbfA from mature subunits. May play a role in the assembly of ribosomal proteins into the subunit. Circularly permuted GTPase that catalyzes slow GTP hydrolysis, GTPase activity is stimulated by the 30S ribosomal subunit. The protein is Small ribosomal subunit biogenesis GTPase RsgA of Enterococcus faecalis (strain ATCC 700802 / V583).